The following is a 318-amino-acid chain: Protoheme IX farnesyltransferase (318 aa).

9 helical membrane passes run 33–53 (VMSLVVFTALVGLVAAPVSVH), 54–74 (PFIGFCAILFIAIGGGASGAL), 102–122 (GEALALGLGLSGLSVMMLALA), 125–145 (VLAGAFLAFTIFFYVVVYTMW), 154–174 (IVIGGAAGAFPPVIGWIAATG), 181–201 (WLMFALTFMWTPPHFWALALF), 225–245 (VHILIYTILLALLALGTAFSN), 246–266 (IGGPIYLAVALVLNALFLLGA), and 288–308 (FFKLSLLYLFLHFGAILAEAL).

This sequence belongs to the UbiA prenyltransferase family. Protoheme IX farnesyltransferase subfamily. In terms of assembly, interacts with CtaA.

Its subcellular location is the cell inner membrane. It carries out the reaction heme b + (2E,6E)-farnesyl diphosphate + H2O = Fe(II)-heme o + diphosphate. The protein operates within porphyrin-containing compound metabolism; heme O biosynthesis; heme O from protoheme: step 1/1. In terms of biological role, converts heme B (protoheme IX) to heme O by substitution of the vinyl group on carbon 2 of heme B porphyrin ring with a hydroxyethyl farnesyl side group. This is Protoheme IX farnesyltransferase from Ruegeria pomeroyi (strain ATCC 700808 / DSM 15171 / DSS-3) (Silicibacter pomeroyi).